A 534-amino-acid chain; its full sequence is GMP synthase [glutamine-hydrolyzing] (534 aa).

A Glutamine amidotransferase type-1 domain is found at 4 to 202; sequence KILILDFGSQ…VLEIAKAQPD (199 aa). C81 serves as the catalytic Nucleophile. Catalysis depends on residues H176 and E178. The GMPS ATP-PPase domain maps to 203 to 402; the sequence is WVMKDHVAEA…LGLPHDMVYR (200 aa). Residue 230-236 coordinates ATP; sequence SGGVDSS.

In terms of assembly, homodimer.

It carries out the reaction XMP + L-glutamine + ATP + H2O = GMP + L-glutamate + AMP + diphosphate + 2 H(+). Its pathway is purine metabolism; GMP biosynthesis; GMP from XMP (L-Gln route): step 1/1. Catalyzes the synthesis of GMP from XMP. The protein is GMP synthase [glutamine-hydrolyzing] of Methylibium petroleiphilum (strain ATCC BAA-1232 / LMG 22953 / PM1).